Consider the following 313-residue polypeptide: MKKNTKISVIGAGFVGSSTVFALMNGGLASEIVIVDVNKDKAEGEAMDLSHGAAFVKPVVVKSGDYKDTEGSDIVIITAGAAQKPGETRLELINKNYNIFKSIVPEVVKYNPNAILLVVSNPVDILTYITYKLSGFPKSRVIGSGTVLDTSRFRYMLSEHFEIDVRNIHTYIMGEHGDSEIATWSLTNIAGMDVNEYCEASCKKCDGSLKYKIYDDVKNAAYHVIEKKGATYYAVALAVKRIVEAILRDENSILTVSSLLEGQYGIKDVYMGVPSIVGINGVKDIIEVPLNDEEKNNLTDSAKTLKESLDSIF.

NAD(+) is bound by residues V15, D36, K41, Y66, and 80-81; that span reads GA. 2 residues coordinate substrate: Q83 and R89. NAD(+) is bound by residues S102, 119–121, and S144; that span reads VSN. 121 to 124 contributes to the substrate binding site; sequence NPVD. Residue 149-152 participates in substrate binding; that stretch reads DTSR. R154 and H169 together coordinate beta-D-fructose 1,6-bisphosphate. Catalysis depends on H176, which acts as the Proton acceptor. Residue Y222 is modified to Phosphotyrosine. T231 is a binding site for substrate.

The protein belongs to the LDH/MDH superfamily. LDH family. Homotetramer.

It localises to the cytoplasm. It catalyses the reaction (S)-lactate + NAD(+) = pyruvate + NADH + H(+). The protein operates within fermentation; pyruvate fermentation to lactate; (S)-lactate from pyruvate: step 1/1. Its activity is regulated as follows. Allosterically activated by fructose 1,6-bisphosphate (FBP). Functionally, catalyzes the conversion of lactate to pyruvate. This is L-lactate dehydrogenase 1 from Clostridium acetobutylicum (strain ATCC 824 / DSM 792 / JCM 1419 / IAM 19013 / LMG 5710 / NBRC 13948 / NRRL B-527 / VKM B-1787 / 2291 / W).